The chain runs to 563 residues: 2-isopropylmalate synthase (563 aa).

Residues 31-305 form the Pyruvate carboxyltransferase domain; that stretch reads PIWMSTDLRD…DPGLDFAQIN (275 aa). 4 residues coordinate Mg(2+): aspartate 40, histidine 244, histidine 246, and asparagine 280. Positions 437–563 are regulatory domain; sequence RAEPIEYLSH…EWARLCGGAE (127 aa).

This sequence belongs to the alpha-IPM synthase/homocitrate synthase family. LeuA type 2 subfamily. As to quaternary structure, homodimer. It depends on Mg(2+) as a cofactor.

Its subcellular location is the cytoplasm. The catalysed reaction is 3-methyl-2-oxobutanoate + acetyl-CoA + H2O = (2S)-2-isopropylmalate + CoA + H(+). The protein operates within amino-acid biosynthesis; L-leucine biosynthesis; L-leucine from 3-methyl-2-oxobutanoate: step 1/4. Functionally, catalyzes the condensation of the acetyl group of acetyl-CoA with 3-methyl-2-oxobutanoate (2-ketoisovalerate) to form 3-carboxy-3-hydroxy-4-methylpentanoate (2-isopropylmalate). This Parvibaculum lavamentivorans (strain DS-1 / DSM 13023 / NCIMB 13966) protein is 2-isopropylmalate synthase.